We begin with the raw amino-acid sequence, 119 residues long: MANIKKGDLVQVITGRTQAKGGDRGKQGRVLSVLVERNRVVVEGVNFVTKHVRVGQTQRGSKTGGIETVEAPIHISNVALVDPESKKPTRVGFRTETVEKDGVSKTVRVRYAKKSGKDL.

This sequence belongs to the universal ribosomal protein uL24 family. As to quaternary structure, part of the 50S ribosomal subunit.

In terms of biological role, one of two assembly initiator proteins, it binds directly to the 5'-end of the 23S rRNA, where it nucleates assembly of the 50S subunit. Functionally, one of the proteins that surrounds the polypeptide exit tunnel on the outside of the subunit. The chain is Large ribosomal subunit protein uL24 from Clavibacter sepedonicus (Clavibacter michiganensis subsp. sepedonicus).